An 809-amino-acid chain; its full sequence is Spindle pole body component alp14 (809 aa).

HEAT repeat units lie at residues 127-164 (DSAA…QFGA) and 167-204 (IPSK…WTGD). 3 disordered regions span residues 233–274 (PPKQ…SDDQ), 507–608 (AKAP…SGAL), and 619–638 (ELDD…RYEH). Over residues 239 to 253 (FLKSQQPTSEPNVET) the composition is skewed to polar residues. Over residues 262–274 (ENEESEPEPSDDQ) the composition is skewed to acidic residues. Basic residues predominate over residues 509 to 518 (APTKKSKVKP). Low complexity-rich tracts occupy residues 526 to 551 (VVVP…SPRK) and 582 to 595 (SRGL…SLQQ). Ser-543 and Ser-548 each carry phosphoserine. Residues 597–608 (VKASTPLNSGAL) show a composition bias toward polar residues. Positions 637-697 (EHPKVLEDND…NTLRSARKAS (61 aa)) form a coiled coil. Residues Ser-697 and Ser-720 each carry the phosphoserine modification.

It belongs to the TOG/XMAP215 family. Interacts with alp14.

It localises to the cytoplasm. The protein localises to the cytoskeleton. Its subcellular location is the microtubule organizing center. The protein resides in the spindle pole body. It is found in the chromosome. It localises to the centromere. The protein localises to the kinetochore. Functionally, required for bipolar spindle formation and proper chromosome segregation. Has a role in connecting the kinetochores and the plus end of pole to chromosome microtubules. Also required for the activation of the spindle checkpoint pathway. The polypeptide is Spindle pole body component alp14 (alp14) (Schizosaccharomyces pombe (strain 972 / ATCC 24843) (Fission yeast)).